We begin with the raw amino-acid sequence, 412 residues long: Short-chain specific acyl-CoA dehydrogenase, mitochondrial (412 aa).

The transit peptide at 1 to 24 directs the protein to the mitochondrion; that stretch reads MAATLLARACGLVRGAPWPWGWRR. At T27 the chain carries Phosphothreonine. K51 carries the post-translational modification N6-acetyllysine; alternate. K51 carries the post-translational modification N6-succinyllysine; alternate. N6-acetyllysine is present on K72. K129 is modified (N6-acetyllysine; alternate). K129 is subject to N6-succinyllysine; alternate. Residues 152–161 and 185–187 each bind FAD; these read FALSEPGNGS and WIT. Position 161 (S161) interacts with substrate. The residue at position 208 (K208) is an N6-acetyllysine. Position 262 is an N6-acetyllysine; alternate (K262). An N6-succinyllysine; alternate modification is found at K262. 269–272 is a binding site for substrate; it reads DTGR. Residue R297 participates in FAD binding. At K306 the chain carries N6-acetyllysine; alternate. K306 bears the N6-succinyllysine; alternate mark. FAD contacts are provided by residues Q308 and 365 to 369; that span reads QILGG. The Proton acceptor role is filled by E392. G393 contacts substrate. 394–396 serves as a coordination point for FAD; sequence TSE.

Belongs to the acyl-CoA dehydrogenase family. As to quaternary structure, homotetramer. It depends on FAD as a cofactor.

The protein localises to the mitochondrion matrix. It catalyses the reaction a short-chain 2,3-saturated fatty acyl-CoA + oxidized [electron-transfer flavoprotein] + H(+) = a short-chain (2E)-enoyl-CoA + reduced [electron-transfer flavoprotein]. The enzyme catalyses butanoyl-CoA + oxidized [electron-transfer flavoprotein] + H(+) = (2E)-butenoyl-CoA + reduced [electron-transfer flavoprotein]. The catalysed reaction is pentanoyl-CoA + oxidized [electron-transfer flavoprotein] + H(+) = (2E)-pentenoyl-CoA + reduced [electron-transfer flavoprotein]. It carries out the reaction hexanoyl-CoA + oxidized [electron-transfer flavoprotein] + H(+) = (2E)-hexenoyl-CoA + reduced [electron-transfer flavoprotein]. Its pathway is lipid metabolism; mitochondrial fatty acid beta-oxidation. Short-chain specific acyl-CoA dehydrogenase is one of the acyl-CoA dehydrogenases that catalyze the first step of mitochondrial fatty acid beta-oxidation, an aerobic process breaking down fatty acids into acetyl-CoA and allowing the production of energy from fats. The first step of fatty acid beta-oxidation consists in the removal of one hydrogen from C-2 and C-3 of the straight-chain fatty acyl-CoA thioester, resulting in the formation of trans-2-enoyl-CoA. Among the different mitochondrial acyl-CoA dehydrogenases, short-chain specific acyl-CoA dehydrogenase acts specifically on acyl-CoAs with saturated 4 to 6 carbons long primary chains. This Bos taurus (Bovine) protein is Short-chain specific acyl-CoA dehydrogenase, mitochondrial (ACADS).